A 464-amino-acid polypeptide reads, in one-letter code: UDP-glycosyltransferase 83A1 (464 aa).

Residues Ser-295, 341 to 343 (APQ), 358 to 366 (HCGWNSTLE), and 380 to 383 (FADQ) each bind UDP-alpha-D-glucose.

It belongs to the UDP-glycosyltransferase family.

The polypeptide is UDP-glycosyltransferase 83A1 (UGT83A1) (Arabidopsis thaliana (Mouse-ear cress)).